A 349-amino-acid polypeptide reads, in one-letter code: DNA polymerase IV (349 aa).

Positions Ile-7–Gly-188 constitute a UmuC domain. Asp-11 and Asp-106 together coordinate Mg(2+). Glu-107 is an active-site residue.

The protein belongs to the DNA polymerase type-Y family. Monomer. The cofactor is Mg(2+).

The protein resides in the cytoplasm. It catalyses the reaction DNA(n) + a 2'-deoxyribonucleoside 5'-triphosphate = DNA(n+1) + diphosphate. Its function is as follows. Poorly processive, error-prone DNA polymerase involved in untargeted mutagenesis. Copies undamaged DNA at stalled replication forks, which arise in vivo from mismatched or misaligned primer ends. These misaligned primers can be extended by PolIV. Exhibits no 3'-5' exonuclease (proofreading) activity. May be involved in translesional synthesis, in conjunction with the beta clamp from PolIII. The polypeptide is DNA polymerase IV (Francisella tularensis subsp. novicida (strain U112)).